Consider the following 268-residue polypeptide: Exodeoxyribonuclease III (268 aa).

E34 lines the Mg(2+) pocket. Y109 is an active-site residue. Mg(2+) is bound by residues D151, N153, and D258. The Proton donor/acceptor role is filled by D151.

The protein belongs to the DNA repair enzymes AP/ExoA family. Monomer. Requires Mg(2+) as cofactor. It depends on Mn(2+) as a cofactor.

It carries out the reaction Exonucleolytic cleavage in the 3'- to 5'-direction to yield nucleoside 5'-phosphates.. In terms of biological role, major apurinic-apyrimidinic endonuclease of E.coli. It removes the damaged DNA at cytosines and guanines by cleaving on the 3'-side of the AP site by a beta-elimination reaction. It exhibits 3'-5'-exonuclease, 3'-phosphomonoesterase, 3'-repair diesterase and ribonuclease H activities. This is Exodeoxyribonuclease III (xthA) from Salmonella typhi.